Reading from the N-terminus, the 416-residue chain is Casein kinase I isoform epsilon (416 aa).

One can recognise a Protein kinase domain in the interval 9-277 (YRLGRKIGSG…YLRQLFRNLF (269 aa)). ATP contacts are provided by residues 15–23 (IGSGSFGDI) and Lys-38. Asp-128 acts as the Proton acceptor in catalysis. The segment covering 301 to 318 (PEDMDRERREHEREERMG) has biased composition (basic and acidic residues). Residues 301-416 (PEDMDRERRE…TSVPFDHLGK (116 aa)) form a disordered region. Positions 324–338 (ATRALPPGPPAGATG) are enriched in low complexity. 2 stretches are compositionally biased toward polar residues: residues 350-365 (STPT…TSPR) and 400-409 (SRISASQTSV).

The protein belongs to the protein kinase superfamily. CK1 Ser/Thr protein kinase family. Casein kinase I subfamily. As to quaternary structure, monomer. Component of the circadian core oscillator, which includes the CRY proteins, CLOCK, or NPAS2, BMAL1 or BMAL2, CSNK1E, and the PER proteins.

The protein resides in the cytoplasm. It carries out the reaction L-seryl-[protein] + ATP = O-phospho-L-seryl-[protein] + ADP + H(+). The catalysed reaction is L-threonyl-[protein] + ATP = O-phospho-L-threonyl-[protein] + ADP + H(+). Its function is as follows. Casein kinases are operationally defined by their preferential utilization of acidic proteins such as caseins as substrates. Can phosphorylate a large number of proteins. Participates in Wnt signaling. Phosphorylates DVL1. Central component of the circadian clock. May act as a negative regulator of circadian rhythmicity by phosphorylating PER1 and PER2. Retains PER1 in the cytoplasm. The chain is Casein kinase I isoform epsilon (CSNK1E) from Gallus gallus (Chicken).